Consider the following 1120-residue polypeptide: Transcription-repair-coupling factor (1120 aa).

One can recognise a Helicase ATP-binding domain in the interval 591-756 (DLTNGMLMDR…LTGLKELSII (166 aa)). Residue 604-611 (GDVGFGKT) coordinates ATP. Positions 709-712 (DEEQ) match the DEEQ box motif. Positions 777 to 933 (IIRDALLREH…TIASHDADLR (157 aa)) constitute a Helicase C-terminal domain.

The protein in the N-terminal section; belongs to the UvrB family. This sequence in the C-terminal section; belongs to the helicase family. RecG subfamily.

The protein resides in the cytoplasm. Its function is as follows. Couples transcription and DNA repair by recognizing RNA polymerase (RNAP) stalled at DNA lesions. Mediates ATP-dependent release of RNAP and its truncated transcript from the DNA, and recruitment of nucleotide excision repair machinery to the damaged site. In Rickettsia typhi (strain ATCC VR-144 / Wilmington), this protein is Transcription-repair-coupling factor.